The following is a 76-amino-acid chain: Protein CYSTEINE-RICH TRANSMEMBRANE MODULE 11 (76 aa).

The segment at 19-45 (GPPPPVGVPPQYYPPPPPPPPPPPPPR) is disordered. Residues 47–63 (VGFLEGLLAALCCCCLV) form a helical membrane-spanning segment.

It belongs to the CYSTM1 family. Heterodimers. Interacts with CYSTM6, CYSTM7 and WIH1/CYSTM13. In terms of tissue distribution, mostly expressed in stems, siliques, leaves and flowers and, to a lower extent, in roots.

The protein resides in the cell membrane. The protein localises to the cytoplasm. In terms of biological role, involved in resistance to abiotic stress. This is Protein CYSTEINE-RICH TRANSMEMBRANE MODULE 11 from Arabidopsis thaliana (Mouse-ear cress).